We begin with the raw amino-acid sequence, 472 residues long: Ribosomal protein uS12 methylthiotransferase RimO (472 aa).

One can recognise an MTTase N-terminal domain in the interval 33-143 (NRIGFVSLGC…VLKHVHKYVP (111 aa)). 6 residues coordinate [4Fe-4S] cluster: Cys42, Cys78, Cys107, Cys175, Cys179, and Cys182. Residues 161 to 398 (LTPKHYAYLK…MEVQAEISAE (238 aa)) form the Radical SAM core domain. Residues 401–467 (ARFVGRTLDI…EHDLWAEVVD (67 aa)) form the TRAM domain.

The protein belongs to the methylthiotransferase family. RimO subfamily. The cofactor is [4Fe-4S] cluster.

The protein resides in the cytoplasm. The enzyme catalyses L-aspartate(89)-[ribosomal protein uS12]-hydrogen + (sulfur carrier)-SH + AH2 + 2 S-adenosyl-L-methionine = 3-methylsulfanyl-L-aspartate(89)-[ribosomal protein uS12]-hydrogen + (sulfur carrier)-H + 5'-deoxyadenosine + L-methionine + A + S-adenosyl-L-homocysteine + 2 H(+). Its function is as follows. Catalyzes the methylthiolation of an aspartic acid residue of ribosomal protein uS12. The polypeptide is Ribosomal protein uS12 methylthiotransferase RimO (Shewanella baltica (strain OS185)).